A 64-amino-acid chain; its full sequence is U9-ctenitoxin-Pr1a (64 aa).

Cystine bridges form between Cys3–Cys15, Cys9–Cys24, Cys14–Cys47, Cys34–Cys55, and Cys49–Cys61.

As to expression, expressed by the venom gland.

The protein localises to the secreted. Functionally, non-toxic to mice and insects. This is U9-ctenitoxin-Pr1a from Phoneutria reidyi (Brazilian Amazonian armed spider).